The sequence spans 169 residues: Disulfide bond formation protein B 1 (169 aa).

Residues 1 to 14 lie on the Cytoplasmic side of the membrane; the sequence is MSDDRLGLGRERRF. A helical transmembrane segment spans residues 15-31; sequence LVLLGIICLALIGGALY. At 32-49 the chain is on the periplasmic side; that stretch reads MQVVLGEAPCPLCILQRY. The cysteines at positions 41 and 44 are disulfide-linked. The chain crosses the membrane as a helical span at residues 50–64; that stretch reads ALLLIALFAFIGAAM. Residues 65-71 are Cytoplasmic-facing; it reads SSRRGVT. Residues 72–89 form a helical membrane-spanning segment; the sequence is VMETLVVICALAGAGVAG. Topologically, residues 90–144 are periplasmic; sequence HHVYTQFYPSVSCGIDVLQPIVDSLPLAKIFPLGFQVDGFCSTPYPPILGLSLAQ. Residues Cys-102 and Cys-130 are joined by a disulfide bond. Residues 145–163 traverse the membrane as a helical segment; the sequence is WALVAFVLTVILVPLGVVR. The Cytoplasmic portion of the chain corresponds to 164-169; sequence NRKKTY.

The protein belongs to the DsbB family.

It localises to the cell inner membrane. Its function is as follows. Required for disulfide bond formation in some periplasmic proteins. Acts by oxidizing the DsbA protein. The polypeptide is Disulfide bond formation protein B 1 (Pseudomonas fluorescens (strain ATCC BAA-477 / NRRL B-23932 / Pf-5)).